The sequence spans 663 residues: UvrABC system protein B (663 aa).

The Helicase ATP-binding domain occupies 31–188 (DNIEGGEKAQ…NDLVDIQFER (158 aa)). 44 to 51 (GATGTGKT) contacts ATP. The short motif at 97-120 (YYDYYQPEAYVPSSDTYIEKDSSV) is the Beta-hairpin element. Positions 435-601 (QMDDLLGEIN…TIKKDIRDLI (167 aa)) constitute a Helicase C-terminal domain. Residues 627-662 (QEAIKKLQKQMQEAAELLDFELAAQIRDMVLELKAM) form the UVR domain.

Belongs to the UvrB family. Forms a heterotetramer with UvrA during the search for lesions. Interacts with UvrC in an incision complex.

It is found in the cytoplasm. Its function is as follows. The UvrABC repair system catalyzes the recognition and processing of DNA lesions. A damage recognition complex composed of 2 UvrA and 2 UvrB subunits scans DNA for abnormalities. Upon binding of the UvrA(2)B(2) complex to a putative damaged site, the DNA wraps around one UvrB monomer. DNA wrap is dependent on ATP binding by UvrB and probably causes local melting of the DNA helix, facilitating insertion of UvrB beta-hairpin between the DNA strands. Then UvrB probes one DNA strand for the presence of a lesion. If a lesion is found the UvrA subunits dissociate and the UvrB-DNA preincision complex is formed. This complex is subsequently bound by UvrC and the second UvrB is released. If no lesion is found, the DNA wraps around the other UvrB subunit that will check the other stand for damage. In Streptococcus mutans serotype c (strain ATCC 700610 / UA159), this protein is UvrABC system protein B.